A 243-amino-acid polypeptide reads, in one-letter code: Sarcospan (243 aa).

The tract at residues 1–43 is disordered; it reads MGKNKQPRGQQRQGGPPAADAAGPDDMEPKKGTGAPKECGEEE. The Cytoplasmic segment spans residues 1 to 53; the sequence is MGKNKQPRGQQRQGGPPAADAAGPDDMEPKKGTGAPKECGEEEPRTCCGCRFP. The span at 7 to 24 shows a compositional bias: low complexity; that stretch reads PRGQQRQGGPPAADAAGP. The chain crosses the membrane as a helical span at residues 54–74; the sequence is LLLALLQLALGIAVTVVGFLM. At 75 to 86 the chain is on the extracellular side; that stretch reads ASISSSLLVRDT. The helical transmembrane segment at 87-107 threads the bilayer; it reads PFWAGIIVCLVAYLGLFMLCV. Residues 108-122 are Cytoplasmic-facing; the sequence is SYQVDERTCIQFSMK. Residues 123 to 143 traverse the membrane as a helical segment; sequence LLYFLLSALGLTVCVLAVAFA. At 144-193 the chain is on the extracellular side; that stretch reads AHHYSQLTQFTCETTLDSCQCKLPSSEPLSRTFVYRDVTDCTSVTGTFKL. Residues 194-214 traverse the membrane as a helical segment; that stretch reads FLLIQMILNLVCGLVCLLACF. Residues 215–243 lie on the Cytoplasmic side of the membrane; sequence VMWKHRYQVFYVGVRICSLTASEGPQQKI.

Isoform 1 is expressed exclusively in heart and skeletal muscle. Isoform 2 is expressed in heart, skeletal muscle, thymus, prostate, testis, ovary, small intestine, colon and spleen.

It localises to the cell membrane. It is found in the sarcolemma. The protein localises to the postsynaptic cell membrane. In terms of biological role, component of the dystrophin-glycoprotein complex (DGC), a complex that spans the muscle plasma membrane and forms a link between the F-actin cytoskeleton and the extracellular matrix. Preferentially associates with the sarcoglycan subcomplex of the DGC. The chain is Sarcospan (SSPN) from Homo sapiens (Human).